Consider the following 223-residue polypeptide: Golgi to ER traffic protein 1 (223 aa).

Met-1 is a topological domain (lumenal). Residues 2-21 (SWVVAIAVVFVVVLKVLEYS) traverse the membrane as a helical segment. Over 22 to 105 (TSYHDLVLQS…QIKGHLKKVK (84 aa)) the chain is Cytoplasmic. Residues 56-105 (ENKSISAQDNYAKWTKNNRKLDKLDKEITELGAQLKAHNEQIKGHLKKVK) are a coiled coil. A helical transmembrane segment spans residues 106–126 (LLLLTVPFLCFKLWKGKHIVY). The Lumenal segment spans residues 127 to 177 (NLPHHQMFPQLVAGVWSQGWLYLAILPLQLAKSIVTGSSFAIETASFPHMG). A helical transmembrane segment spans residues 178–194 (VSLGIWLWALNSVISNI). At 195 to 223 (EFMTMQLWAKPVSKPSKKLEIVTDEIKVD) the chain is on the cytoplasmic side.

Belongs to the WRB/GET1 family. Component of the Golgi to ER traffic (GET) complex, which is composed of GET1, GET2 and GET3. Within the complex, GET1 and GET2 form a heterotetramer which is stabilized by phosphatidylinositol binding and which binds to the GET3 homodimer.

It is found in the endoplasmic reticulum membrane. Its subcellular location is the golgi apparatus membrane. Its function is as follows. Required for the post-translational delivery of tail-anchored (TA) proteins to the endoplasmic reticulum. Together with GET2, acts as a membrane receptor for soluble GET3, which recognizes and selectively binds the transmembrane domain of TA proteins in the cytosol. The GET complex cooperates with the HDEL receptor ERD2 to mediate the ATP-dependent retrieval of resident ER proteins that contain a C-terminal H-D-E-L retention signal from the Golgi to the ER. This is Golgi to ER traffic protein 1 from Candida glabrata (strain ATCC 2001 / BCRC 20586 / JCM 3761 / NBRC 0622 / NRRL Y-65 / CBS 138) (Yeast).